Here is a 765-residue protein sequence, read N- to C-terminus: Transcription factor SKN7 (765 aa).

Residues 1–42 (MPPTNGEGGSQQPQQQQQQQQQQQQQQQQQQQQQQGGSGSSD) form a disordered region. Low complexity predominate over residues 11–35 (QQPQQQQQQQQQQQQQQQQQQQQQQ). The interval 40 to 145 (SSDFVRKLYK…NLDNIRRKAP (106 aa)) is DNA-binding domain. A coiled-coil region spans residues 157–198 (FNASQQQIAALSESLQATQQQLQALQQQCYELEKTNRLLVSE). Positions 160–220 (SQQQIAALSE…QASNEIINHL (61 aa)) are hydrophobic repeat HR-A/B. Positions 371-391 (SSSQITPSQITPPPKDQMSSM) are disordered. In terms of domain architecture, Response regulatory spans 398–514 (RVLLVEDDKT…NMSRLLRRHL (117 aa)). Position 449 is a 4-aspartylphosphate (Asp449). A transactivation domain region spans residues 542-765 (TAGPATTGVG…PGVGVAGFVQ (224 aa)). Positions 550-564 (VGVGVAGAPSGGAHG) are enriched in gly residues. 2 disordered regions span residues 550-647 (VGVG…PAGL) and 686-765 (PGAM…GFVQ). Positions 569 to 584 (AQHQQGYAMAPPTTMQ) are enriched in low complexity. Positions 626-636 (QPPPPPTPTQP) are enriched in pro residues. Low complexity-rich tracts occupy residues 637 to 647 (SPTSAAPPAGL) and 699 to 715 (GVGHPAPSGAGSAAGAR). The segment covering 755 to 765 (HPGVGVAGFVQ) has biased composition (gly residues).

Belongs to the SKN7 family. Homotrimer.

The protein localises to the nucleus. In terms of biological role, transcription factor that is part of a SLN1-YPD1-SKN7 two-component regulatory system, which controls gene expression in response to changes in the osmolarity of the extracellular environment. Under low osmotic conditions, phosphorylated and activated by the phosphorelay intermediate protein YPD1. Also activated in response to oxidative stress, independent on the two-component regulatory system. Regulates heat shock genes in response to oxidative stress and genes involved in cell wall integrity in response to osmotic changes. The protein is Transcription factor SKN7 of Chaetomium thermophilum (strain DSM 1495 / CBS 144.50 / IMI 039719) (Thermochaetoides thermophila).